The primary structure comprises 122 residues: Large ribosomal subunit protein uL14 (122 aa).

The protein belongs to the universal ribosomal protein uL14 family. As to quaternary structure, part of the 50S ribosomal subunit. Forms a cluster with proteins L3 and L19. In the 70S ribosome, L14 and L19 interact and together make contacts with the 16S rRNA in bridges B5 and B8.

Binds to 23S rRNA. Forms part of two intersubunit bridges in the 70S ribosome. This Bacillus velezensis (strain DSM 23117 / BGSC 10A6 / LMG 26770 / FZB42) (Bacillus amyloliquefaciens subsp. plantarum) protein is Large ribosomal subunit protein uL14.